Reading from the N-terminus, the 180-residue chain is Ribosome rescue factor SmrB (180 aa).

The Smr domain occupies 98-173 (LDLHGLTQLQ…GNAALLVLVA (76 aa)).

This sequence belongs to the SmrB family. As to quaternary structure, associates with collided ribosomes, but not with correctly translating polysomes.

In terms of biological role, acts as a ribosome collision sensor. Detects stalled/collided disomes (pairs of ribosomes where the leading ribosome is stalled and a second ribosome has collided with it) and endonucleolytically cleaves mRNA at the 5' boundary of the stalled ribosome. Stalled/collided disomes form a new interface (primarily via the 30S subunits) that binds SmrB. Cleaved mRNA becomes available for tmRNA ligation, leading to ribosomal subunit dissociation and rescue of stalled ribosomes. The chain is Ribosome rescue factor SmrB from Pectobacterium atrosepticum (strain SCRI 1043 / ATCC BAA-672) (Erwinia carotovora subsp. atroseptica).